Reading from the N-terminus, the 373-residue chain is Putative aminopeptidase SgcX (373 aa).

The a divalent metal cation site is built by H67 and D180. Catalysis depends on E212, which acts as the Proton acceptor. E213, D235, and H329 together coordinate a divalent metal cation.

The protein belongs to the peptidase M42 family. It depends on a divalent metal cation as a cofactor.

The chain is Putative aminopeptidase SgcX (sgcX) from Escherichia coli (strain K12).